A 727-amino-acid polypeptide reads, in one-letter code: 1,4-alpha-glucan branching enzyme GlgB (727 aa).

D411 serves as the catalytic Nucleophile. Residue E464 is the Proton donor of the active site.

This sequence belongs to the glycosyl hydrolase 13 family. GlgB subfamily. In terms of assembly, monomer.

The catalysed reaction is Transfers a segment of a (1-&gt;4)-alpha-D-glucan chain to a primary hydroxy group in a similar glucan chain.. It functions in the pathway glycan biosynthesis; glycogen biosynthesis. In terms of biological role, catalyzes the formation of the alpha-1,6-glucosidic linkages in glycogen by scission of a 1,4-alpha-linked oligosaccharide from growing alpha-1,4-glucan chains and the subsequent attachment of the oligosaccharide to the alpha-1,6 position. The sequence is that of 1,4-alpha-glucan branching enzyme GlgB from Protochlamydia amoebophila (strain UWE25).